The chain runs to 205 residues: FMN reductase (NADH) RutF (205 aa).

A disordered region spans residues 171–205; sequence PRAPRSGSAPAEPARAARALGARPAEGPALALRSA.

Belongs to the non-flavoprotein flavin reductase family. RutF subfamily.

The enzyme catalyses FMNH2 + NAD(+) = FMN + NADH + 2 H(+). Its function is as follows. Catalyzes the reduction of FMN to FMNH2 which is used to reduce pyrimidine by RutA via the Rut pathway. This is FMN reductase (NADH) RutF from Methylorubrum extorquens (strain DSM 6343 / CIP 106787 / DM4) (Methylobacterium extorquens).